The chain runs to 300 residues: Tyrosine recombinase XerC (300 aa).

The Core-binding (CB) domain occupies Thr2–Leu88. The Tyr recombinase domain occupies Arg109–Met294. Catalysis depends on residues Arg150, Lys174, His246, Arg249, and His272. The active-site O-(3'-phospho-DNA)-tyrosine intermediate is the Tyr281.

It belongs to the 'phage' integrase family. XerC subfamily. Forms a cyclic heterotetrameric complex composed of two molecules of XerC and two molecules of XerD.

It is found in the cytoplasm. Functionally, site-specific tyrosine recombinase, which acts by catalyzing the cutting and rejoining of the recombining DNA molecules. The XerC-XerD complex is essential to convert dimers of the bacterial chromosome into monomers to permit their segregation at cell division. It also contributes to the segregational stability of plasmids. The sequence is that of Tyrosine recombinase XerC from Listeria innocua serovar 6a (strain ATCC BAA-680 / CLIP 11262).